The sequence spans 341 residues: Glucokinase (341 aa).

Residue 18 to 23 (GDIGGT) participates in ATP binding.

Belongs to the bacterial glucokinase family.

Its subcellular location is the cytoplasm. It catalyses the reaction D-glucose + ATP = D-glucose 6-phosphate + ADP + H(+). The sequence is that of Glucokinase from Rhizobium etli (strain CIAT 652).